A 707-amino-acid chain; its full sequence is Lipase maturation factor 2 (707 aa).

A run of 10 helical transmembrane segments spans residues Leu-10–Ile-30, Leu-78–Leu-98, Val-102–Leu-122, Tyr-123–Leu-143, Asp-165–Val-185, Leu-227–Ile-247, Val-259–Leu-279, Ala-310–Gly-330, Leu-364–Leu-384, and Ala-399–Val-419. N-linked (GlcNAc...) asparagine glycosylation is found at Asn-489 and Asn-616. The chain crosses the membrane as a helical span at residues Ala-637 to Ala-657. The disordered stretch occupies residues Pro-665–Lys-707. Residues Gln-679–Ala-691 are compositionally biased toward polar residues.

This sequence belongs to the lipase maturation factor family.

It is found in the endoplasmic reticulum membrane. Its function is as follows. Involved in the maturation of specific proteins in the endoplasmic reticulum. May be required for maturation and transport of active lipoprotein lipase (LPL) through the secretory pathway. The polypeptide is Lipase maturation factor 2 (LMF2) (Homo sapiens (Human)).